A 419-amino-acid chain; its full sequence is Adenylosuccinate synthetase (419 aa).

Residues 15–21 (GDEGKGK) and 43–45 (GHT) contribute to the GTP site. The active-site Proton acceptor is Asp16. 2 residues coordinate Mg(2+): Asp16 and Gly43. IMP-binding positions include 16-19 (DEGK), 41-44 (NAGH), Thr128, Arg142, Gln223, Thr238, and Arg302. Catalysis depends on His44, which acts as the Proton donor. 298–304 (TTTGRAR) contributes to the substrate binding site. GTP contacts are provided by residues Arg304, 330 to 332 (KLD), and 408 to 410 (STS).

This sequence belongs to the adenylosuccinate synthetase family. As to quaternary structure, homodimer. It depends on Mg(2+) as a cofactor.

It localises to the cytoplasm. The catalysed reaction is IMP + L-aspartate + GTP = N(6)-(1,2-dicarboxyethyl)-AMP + GDP + phosphate + 2 H(+). It functions in the pathway purine metabolism; AMP biosynthesis via de novo pathway; AMP from IMP: step 1/2. Plays an important role in the de novo pathway of purine nucleotide biosynthesis. Catalyzes the first committed step in the biosynthesis of AMP from IMP. This is Adenylosuccinate synthetase from Sulfurimonas denitrificans (strain ATCC 33889 / DSM 1251) (Thiomicrospira denitrificans (strain ATCC 33889 / DSM 1251)).